A 124-amino-acid chain; its full sequence is Small ribosomal subunit protein uS13 (124 aa).

A disordered region spans residues 89–124; it reads GRRHRQGLPVRGQRTKTNARTRKGPKRTVAGKKKAK. Residues 101–124 are compositionally biased toward basic residues; it reads QRTKTNARTRKGPKRTVAGKKKAK.

The protein belongs to the universal ribosomal protein uS13 family. In terms of assembly, part of the 30S ribosomal subunit. Forms a loose heterodimer with protein S19. Forms two bridges to the 50S subunit in the 70S ribosome.

Functionally, located at the top of the head of the 30S subunit, it contacts several helices of the 16S rRNA. In the 70S ribosome it contacts the 23S rRNA (bridge B1a) and protein L5 of the 50S subunit (bridge B1b), connecting the 2 subunits; these bridges are implicated in subunit movement. Contacts the tRNAs in the A and P-sites. This Nocardioides sp. (strain ATCC BAA-499 / JS614) protein is Small ribosomal subunit protein uS13.